The primary structure comprises 129 residues: Putative reactive intermediate deaminase TdcF (129 aa).

Lys-58 is subject to N6-(pyridoxal phosphate)lysine. Substrate contacts are provided by residues 105–107 (RSC) and Glu-120.

It belongs to the RutC family. As to quaternary structure, homotrimer.

It functions in the pathway amino-acid degradation; L-threonine degradation via propanoate pathway. In terms of biological role, may be a post-translational regulator that controls the metabolic fate of L-threonine or the potentially toxic intermediate 2-ketobutyrate. The chain is Putative reactive intermediate deaminase TdcF (tdcF) from Escherichia coli O6:H1 (strain CFT073 / ATCC 700928 / UPEC).